A 245-amino-acid polypeptide reads, in one-letter code: Transcriptional activator protein ExpR (245 aa).

Residues 173–238 (RSNDKDIFSQ…HAIRLGIELQ (66 aa)) form the HTH luxR-type domain. The segment at residues 197–216 (YQEIALILDIKTGTVKFHIG) is a DNA-binding region (H-T-H motif).

This sequence belongs to the autoinducer-regulated transcriptional regulatory protein family.

Its function is as follows. Functions as an OHLL responsive transcriptional regulator that acts in virulence (soft rot disease) through the activation of genes for plant tissue macerating enzymes. The sequence is that of Transcriptional activator protein ExpR (expR) from Pectobacterium parmentieri.